A 233-amino-acid chain; its full sequence is Large ribosomal subunit protein uL1 (233 aa).

It belongs to the universal ribosomal protein uL1 family. Part of the 50S ribosomal subunit.

Its function is as follows. Binds directly to 23S rRNA. The L1 stalk is quite mobile in the ribosome, and is involved in E site tRNA release. Protein L1 is also a translational repressor protein, it controls the translation of the L11 operon by binding to its mRNA. The chain is Large ribosomal subunit protein uL1 from Shewanella frigidimarina (strain NCIMB 400).